Here is a 563-residue protein sequence, read N- to C-terminus: GTPase Obg (563 aa).

Positions 2 to 168 (SDFVDRVTVH…RDVILELKSI (167 aa)) constitute an Obg domain. The OBG-type G domain occupies 169 to 349 (ADVALVGFPS…LNWALADLVT (181 aa)). GTP-binding positions include 175–182 (GFPSAGKS), 200–204 (FTTLV), 221–224 (DVPG), 301–304 (NKVD), and 330–332 (STA). The Mg(2+) site is built by Ser182 and Thr202. In terms of domain architecture, OCT spans 383–469 (DEGGNALDFT…DRAVEFDWDP (87 aa)). The segment at 525 to 563 (MMAERKAGHWADPSVDDDRHDETSLFGRGETADDEDVEQ) is disordered.

The protein belongs to the TRAFAC class OBG-HflX-like GTPase superfamily. OBG GTPase family. Monomer. It depends on Mg(2+) as a cofactor.

It is found in the cytoplasm. Functionally, an essential GTPase which binds GTP, GDP and possibly (p)ppGpp with moderate affinity, with high nucleotide exchange rates and a fairly low GTP hydrolysis rate. Plays a role in control of the cell cycle, stress response, ribosome biogenesis and in those bacteria that undergo differentiation, in morphogenesis control. This is GTPase Obg from Bifidobacterium adolescentis (strain ATCC 15703 / DSM 20083 / NCTC 11814 / E194a).